The primary structure comprises 598 residues: Aspartate--tRNA ligase (598 aa).

Residue glutamate 173 coordinates L-aspartate. Residues 197–200 form an aspartate region; sequence QLFK. Arginine 219 contacts L-aspartate. Residues 219–221 and glutamine 228 contribute to the ATP site; that span reads RDE. Histidine 449 lines the L-aspartate pocket. Glutamate 483 contributes to the ATP binding site. Arginine 490 lines the L-aspartate pocket. An ATP-binding site is contributed by 535 to 538; the sequence is GLDR.

Belongs to the class-II aminoacyl-tRNA synthetase family. Type 1 subfamily. As to quaternary structure, homodimer.

The protein resides in the cytoplasm. The catalysed reaction is tRNA(Asp) + L-aspartate + ATP = L-aspartyl-tRNA(Asp) + AMP + diphosphate. Its function is as follows. Catalyzes the attachment of L-aspartate to tRNA(Asp) in a two-step reaction: L-aspartate is first activated by ATP to form Asp-AMP and then transferred to the acceptor end of tRNA(Asp). The sequence is that of Aspartate--tRNA ligase from Shewanella halifaxensis (strain HAW-EB4).